A 185-amino-acid chain; its full sequence is Ribosome-recycling factor (185 aa).

It belongs to the RRF family.

The protein localises to the cytoplasm. In terms of biological role, responsible for the release of ribosomes from messenger RNA at the termination of protein biosynthesis. May increase the efficiency of translation by recycling ribosomes from one round of translation to another. The protein is Ribosome-recycling factor of Legionella pneumophila (strain Corby).